A 596-amino-acid polypeptide reads, in one-letter code: MNIDLVLREAIQNAFQSVFELSIPLADVNLQPTRKEFEGTHTLIVFPFTTTCKVSPEVIANKIGDWMQTNTQAIASYNVVKGFLNLSIKDTIWLASFNQMYQNKHFGYLPSNRQKIVVEYSSPNTNKPLHLGHLRNNFLGHAVSEILQAAGYEVYKVNLVNDRGIHICKSMVAYQHWGRGETPESRGLKGDQLVGKYYVKFDQVYKEQVAALTQTLGDAEQAAKQAPLLQEAQVMLKQWEAGNEEVLALWRKMNGWVYDGFDITYQKLGITFDKVYYESQTYLLGKEVVAEGLAKGTFYKKQDGSVWIDLTQEGLDEKLLLRADGTSVYITQDLGTADLRYQDFKPNKLVYVVGNEQDYHFEVLAKIMARLGRPYATDLYHLSYGMVDLPTGKMKSREGTVVDADMLIDEMIETAEEHTRELGKIDGFSKEEAKDLYHILAMGALKYFLLRVDAKKRLLFDPQASIDFQGDTGPFIQYTHARIAAVLRKVQQADIAFNDIVEQENFVLHPLEREVIVELAAFPKKLQESALAYAPAILAQHVLEIAKAYNRMYAELSILHEQDTKVQLFRIQLSVLVAQVIKTVMHLLGIVVPERM.

The short motif at 123–133 (PNTNKPLHLGH) is the 'HIGH' region element.

This sequence belongs to the class-I aminoacyl-tRNA synthetase family. Monomer.

The protein localises to the cytoplasm. The enzyme catalyses tRNA(Arg) + L-arginine + ATP = L-arginyl-tRNA(Arg) + AMP + diphosphate. In Amoebophilus asiaticus (strain 5a2), this protein is Arginine--tRNA ligase.